The following is an 816-amino-acid chain: Acyl-homoserine lactone acylase QuiP (816 aa).

The first 33 residues, 1–33 (MASPALSHFLPRFGVAAAVAGVLSLTGCQTWNA), serve as a signal peptide directing secretion. Ser262 serves as the catalytic Nucleophile.

It belongs to the peptidase S45 family. Heterodimer of an alpha subunit and a beta subunit processed from the same precursor.

The protein resides in the periplasm. The catalysed reaction is an N-acyl-L-homoserine lactone + H2O = L-homoserine lactone + a carboxylate. Catalyzes the deacylation of acyl-homoserine lactone (AHL or acyl-HSL), releasing homoserine lactone (HSL) and the corresponding fatty acid. Possesses a specificity for the degradation of long-chain acyl-HSLs (side chains of seven or more carbons in length). The polypeptide is Acyl-homoserine lactone acylase QuiP (quiP) (Pseudomonas fluorescens (strain Pf0-1)).